The chain runs to 463 residues: Nucleobindin-1 (463 aa).

Positions Met-1–Ala-26 are cleaved as a signal peptide. Ser-86 carries the post-translational modification Phosphoserine. At Thr-148 the chain carries Phosphothreonine. Residues Glu-150–Lys-218 are a coiled coil. The DNA-binding element occupies His-172 to Lys-218. Basic and acidic residues predominate over residues Ser-193–Gln-210. The disordered stretch occupies residues Ser-193 to Val-221. The segment at Leu-228–Thr-321 is binds to GNAI2 and GNAI3. EF-hand domains follow at residues Pro-240 to Lys-275 and Glu-292 to Gly-327. Ca(2+) contacts are provided by Asp-253, Asn-255, Asp-257, Glu-264, Asp-305, Asn-307, Asp-309, and Glu-316. Positions Asn-303 to Trp-333 match the GBA motif. Positions Ala-341–Gln-409 form a coiled coil. The disordered stretch occupies residues Leu-368 to Leu-463. Ser-369 is subject to Phosphoserine. Over residues Asp-439–Leu-463 the composition is skewed to basic and acidic residues.

Belongs to the nucleobindin family. Interacts (via GBA motif) with guanine nucleotide-binding protein G(i) alpha subunits GNAI1, GNAI2 and GNAI3 with higher affinity for GNAI1 and GNAI3 than for GNAI2. Preferentially interacts with inactive rather than active GNAI3. Interaction with GNAI3 is inhibited when NUCB1 binds calcium, probably due to a conformational change which renders the GBA motif inaccessible.

The protein resides in the golgi apparatus. The protein localises to the cis-Golgi network membrane. It is found in the cytoplasm. Its subcellular location is the secreted. In terms of biological role, major calcium-binding protein of the Golgi which may have a role in calcium homeostasis. Acts as a non-receptor guanine nucleotide exchange factor which binds to and activates alpha subunits of guanine nucleotide-binding proteins (G proteins). The protein is Nucleobindin-1 (NUCB1) of Pongo abelii (Sumatran orangutan).